The sequence spans 391 residues: Phosphoglycerate kinase (391 aa).

Substrate contacts are provided by residues 21–23 (DLN), Arg36, 59–62 (HLGR), Arg113, and Arg146. ATP-binding positions include Lys197, Glu319, and 345 to 348 (GGDT).

It belongs to the phosphoglycerate kinase family. Monomer.

The protein resides in the cytoplasm. The catalysed reaction is (2R)-3-phosphoglycerate + ATP = (2R)-3-phospho-glyceroyl phosphate + ADP. It functions in the pathway carbohydrate degradation; glycolysis; pyruvate from D-glyceraldehyde 3-phosphate: step 2/5. The chain is Phosphoglycerate kinase from Shewanella baltica (strain OS223).